Here is a 1180-residue protein sequence, read N- to C-terminus: Polyamine-transporting ATPase 13A2 (1180 aa).

Over 1–44 (MSADSSPLVGSTPTGYGTLTIGTSIDPLSSSVSSVRLSGYCGSP) the chain is Cytoplasmic. An intramembrane segment occupies 45-65 (WRVIGYHVVVWMMAGIPLLLF). Residues 66-235 (RWKPLWGVRL…KSYPQLLVDE (170 aa)) are Cytoplasmic-facing. At S151 the chain carries Phosphoserine. The chain crosses the membrane as a helical span at residues 236–253 (ALNPYYGFQAFSIALWLA). Residues 254-256 (DHY) are Lumenal-facing. The chain crosses the membrane as a helical span at residues 257–276 (YWYALCIFLISSISICLSLY). Residues 277-427 (KTRKQSQTLR…NFKFYKHSMK (151 aa)) are Cytoplasmic-facing. The helical transmembrane segment at 428 to 448 (FVAALSVLALLGTIYSIFILY) threads the bilayer. Over 449-463 (RNRVPLNEIVIRALD) the chain is Lumenal. The helical transmembrane segment at 464-484 (LVTVVVPPALPAAMTVCTLYA) threads the bilayer. Residues 485–930 (QSRLRRQGIF…REGRCSLDTS (446 aa)) are Cytoplasmic-facing. The active-site 4-aspartylphosphate intermediate is the D513. Mg(2+)-binding residues include D878 and D882. Residues 931–951 (FSVFKYMALYSLTQFISVLIL) traverse the membrane as a helical segment. Residues 952-957 (YTINTN) lie on the Lumenal side of the membrane. The helical transmembrane segment at 958–978 (LGDLQFLAIDLVITTTVAVLM) threads the bilayer. Residues 979-994 (SRTGPALVLGRVRPPG) are Cytoplasmic-facing. The chain crosses the membrane as a helical span at residues 995 to 1015 (ALLSVPVLSSLLLQMVLVTGV). Topologically, residues 1016 to 1048 (QLGGYFLTLAQPWFVPLNRTVAAPDNLPNYENT) are lumenal. Residue N1033 is glycosylated (N-linked (GlcNAc...) asparagine). Residues 1049-1069 (VVFSLSSFQYLILAAAVSKGA) form a helical membrane-spanning segment. Residues 1070 to 1080 (PFRRPLYTNVP) lie on the Cytoplasmic side of the membrane. Residues 1081 to 1101 (FLVALALLSSVLVGLVLVPGL) form a helical membrane-spanning segment. Residues 1102–1117 (LQGPLALRNITDTGFK) are Lumenal-facing. N1110 is a glycosylation site (N-linked (GlcNAc...) asparagine). The helical transmembrane segment at 1118–1138 (LLLLGLVTLNFVGAFMLESVL) threads the bilayer. The Cytoplasmic segment spans residues 1139–1180 (DQCLPACLRRLRPKRASKKRFKQLERELAEQPWPPLPAGPLR).

Belongs to the cation transport ATPase (P-type) (TC 3.A.3) family. Type V subfamily. As to quaternary structure, interacts with MYCBP2; the interaction inhibits the ubiquitination of TSC2 by MYCBP2. Interacts with HDAC6; the interaction results in recruitment of HDAC6 to lysosomes to promote CTTN deacetylation. Post-translationally, autophosphorylated. Accumulates in an inactive autophosphorylated state and autophosphorylation is stimulated by phosphatidic acid and phosphatidylinositol 3,5-bisphosphate but not by Mn(2+) or Zn(2+). The presence of spermine results in a dose-dependent reduction in autophosphorylation. In terms of tissue distribution, expressed in brain; protein levels are markedly increased in brain from subjects with Parkinson disease and subjects with dementia with Lewy bodies. Detected in pyramidal neurons located throughout the cingulate cortex (at protein level). In the substantia nigra, it is found in neuromelanin-positive dopaminergic neurons (at protein level).

Its subcellular location is the lysosome membrane. The protein localises to the late endosome membrane. It is found in the endosome. The protein resides in the multivesicular body membrane. It localises to the cytoplasmic vesicle. Its subcellular location is the autophagosome membrane. It carries out the reaction spermidine(out) + ATP + H2O = spermidine(in) + ADP + phosphate + H(+). The catalysed reaction is spermine(out) + ATP + H2O = spermine(in) + ADP + phosphate + H(+). Its activity is regulated as follows. Accumulates in an inactive autophosphorylated state. The presence of spermine results in a dose-dependent reduction in autophosphorylation. ATPase which acts as a lysosomal polyamine exporter with high affinity for spermine. Also stimulates cellular uptake of polyamines and protects against polyamine toxicity. Plays a role in intracellular cation homeostasis and the maintenance of neuronal integrity. Contributes to cellular zinc homeostasis. Confers cellular protection against Mn(2+) and Zn(2+) toxicity and mitochondrial stress. Required for proper lysosomal and mitochondrial maintenance. Regulates the autophagy-lysosome pathway through the control of SYT11 expression at both transcriptional and post-translational levels. Facilitates recruitment of deacetylase HDAC6 to lysosomes to deacetylate CTTN, leading to actin polymerization, promotion of autophagosome-lysosome fusion and completion of autophagy. Promotes secretion of exosomes as well as secretion of SCNA via exosomes. Plays a role in lipid homeostasis. In Homo sapiens (Human), this protein is Polyamine-transporting ATPase 13A2.